Here is a 111-residue protein sequence, read N- to C-terminus: PHD finger-like domain-containing protein 5A (111 aa).

This sequence belongs to the PHF5 family.

This Drosophila melanogaster (Fruit fly) protein is PHD finger-like domain-containing protein 5A.